A 236-amino-acid polypeptide reads, in one-letter code: 7-cyano-7-deazaguanine synthase (236 aa).

Residue 7–17 (CSGGLDSVSLA) coordinates ATP. Positions 185, 193, 196, and 199 each coordinate Zn(2+).

It belongs to the QueC family. Zn(2+) serves as cofactor.

The enzyme catalyses 7-carboxy-7-deazaguanine + NH4(+) + ATP = 7-cyano-7-deazaguanine + ADP + phosphate + H2O + H(+). It functions in the pathway purine metabolism; 7-cyano-7-deazaguanine biosynthesis. Catalyzes the ATP-dependent conversion of 7-carboxy-7-deazaguanine (CDG) to 7-cyano-7-deazaguanine (preQ(0)). The protein is 7-cyano-7-deazaguanine synthase of Rhizobium etli (strain CIAT 652).